The primary structure comprises 215 residues: MLGAVGPGALWGFEREIMNLVPMVVEQTSRGERAYDIYSRLLKERIIFITGTVEDNMASLIVAQLVFLEAENPEKDISLYINSPGGVVTAGLSIYDTMQYIKPKVSTLCLGQAASMGALLLAGGEPGMRYALPNSRIMVHQPSGGFRGQATDIEIHAREILEIKRRLNEIYVKHTGKSLEEIESSMERDNFMVAEKAKDFGIVDKVIDKRGGEQI.

The active-site Nucleophile is Ser-115. His-140 is a catalytic residue.

This sequence belongs to the peptidase S14 family. As to quaternary structure, fourteen ClpP subunits assemble into 2 heptameric rings which stack back to back to give a disk-like structure with a central cavity, resembling the structure of eukaryotic proteasomes.

It localises to the cytoplasm. It carries out the reaction Hydrolysis of proteins to small peptides in the presence of ATP and magnesium. alpha-casein is the usual test substrate. In the absence of ATP, only oligopeptides shorter than five residues are hydrolyzed (such as succinyl-Leu-Tyr-|-NHMec, and Leu-Tyr-Leu-|-Tyr-Trp, in which cleavage of the -Tyr-|-Leu- and -Tyr-|-Trp bonds also occurs).. Functionally, cleaves peptides in various proteins in a process that requires ATP hydrolysis. Has a chymotrypsin-like activity. Plays a major role in the degradation of misfolded proteins. The sequence is that of ATP-dependent Clp protease proteolytic subunit from Anaplasma marginale (strain Florida).